The following is a 334-amino-acid chain: 4-hydroxy-3-methylbut-2-enyl diphosphate reductase (334 aa).

C19 is a binding site for [4Fe-4S] cluster. H48 and H84 together coordinate (2E)-4-hydroxy-3-methylbut-2-enyl diphosphate. Positions 48 and 84 each coordinate dimethylallyl diphosphate. The isopentenyl diphosphate site is built by H48 and H84. C106 serves as a coordination point for [4Fe-4S] cluster. Residue H134 participates in (2E)-4-hydroxy-3-methylbut-2-enyl diphosphate binding. A dimethylallyl diphosphate-binding site is contributed by H134. An isopentenyl diphosphate-binding site is contributed by H134. Residue E136 is the Proton donor of the active site. T175 contacts (2E)-4-hydroxy-3-methylbut-2-enyl diphosphate. C205 is a [4Fe-4S] cluster binding site. (2E)-4-hydroxy-3-methylbut-2-enyl diphosphate is bound by residues S233, S234, N235, and S278. Dimethylallyl diphosphate is bound by residues S233, S234, N235, and S278. Residues S233, S234, N235, and S278 each coordinate isopentenyl diphosphate.

The protein belongs to the IspH family. It depends on [4Fe-4S] cluster as a cofactor.

It carries out the reaction isopentenyl diphosphate + 2 oxidized [2Fe-2S]-[ferredoxin] + H2O = (2E)-4-hydroxy-3-methylbut-2-enyl diphosphate + 2 reduced [2Fe-2S]-[ferredoxin] + 2 H(+). It catalyses the reaction dimethylallyl diphosphate + 2 oxidized [2Fe-2S]-[ferredoxin] + H2O = (2E)-4-hydroxy-3-methylbut-2-enyl diphosphate + 2 reduced [2Fe-2S]-[ferredoxin] + 2 H(+). It functions in the pathway isoprenoid biosynthesis; dimethylallyl diphosphate biosynthesis; dimethylallyl diphosphate from (2E)-4-hydroxy-3-methylbutenyl diphosphate: step 1/1. Its pathway is isoprenoid biosynthesis; isopentenyl diphosphate biosynthesis via DXP pathway; isopentenyl diphosphate from 1-deoxy-D-xylulose 5-phosphate: step 6/6. Catalyzes the conversion of 1-hydroxy-2-methyl-2-(E)-butenyl 4-diphosphate (HMBPP) into a mixture of isopentenyl diphosphate (IPP) and dimethylallyl diphosphate (DMAPP). Acts in the terminal step of the DOXP/MEP pathway for isoprenoid precursor biosynthesis. In Chelativorans sp. (strain BNC1), this protein is 4-hydroxy-3-methylbut-2-enyl diphosphate reductase.